Reading from the N-terminus, the 103-residue chain is Pyrimidine/purine nucleoside phosphorylase (103 aa).

It belongs to the nucleoside phosphorylase PpnP family.

It carries out the reaction a purine D-ribonucleoside + phosphate = a purine nucleobase + alpha-D-ribose 1-phosphate. The enzyme catalyses adenosine + phosphate = alpha-D-ribose 1-phosphate + adenine. The catalysed reaction is cytidine + phosphate = cytosine + alpha-D-ribose 1-phosphate. It catalyses the reaction guanosine + phosphate = alpha-D-ribose 1-phosphate + guanine. It carries out the reaction inosine + phosphate = alpha-D-ribose 1-phosphate + hypoxanthine. The enzyme catalyses thymidine + phosphate = 2-deoxy-alpha-D-ribose 1-phosphate + thymine. The catalysed reaction is uridine + phosphate = alpha-D-ribose 1-phosphate + uracil. It catalyses the reaction xanthosine + phosphate = alpha-D-ribose 1-phosphate + xanthine. Its function is as follows. Catalyzes the phosphorolysis of diverse nucleosides, yielding D-ribose 1-phosphate and the respective free bases. Can use uridine, adenosine, guanosine, cytidine, thymidine, inosine and xanthosine as substrates. Also catalyzes the reverse reactions. The sequence is that of Pyrimidine/purine nucleoside phosphorylase from Shewanella baltica (strain OS223).